The sequence spans 356 residues: Holliday junction branch migration complex subunit RuvB (356 aa).

The segment at 4 to 191 (TDKLATEQRI…FGIVARLEFY (188 aa)) is large ATPase domain (RuvB-L). Residues Leu-30, Arg-31, Gly-72, Lys-75, Thr-76, Thr-77, 138–140 (EDY), Arg-181, Tyr-191, and Arg-228 contribute to the ATP site. Thr-76 is a Mg(2+) binding site. The interval 192-262 (DADQLSRIVR…VADAALAMLD (71 aa)) is small ATPAse domain (RuvB-S). The tract at residues 265–356 (PVGFDLMDRK…RDEWDTPDGK (92 aa)) is head domain (RuvB-H). DNA is bound by residues Arg-301, Arg-320, and Arg-325.

Belongs to the RuvB family. Homohexamer. Forms an RuvA(8)-RuvB(12)-Holliday junction (HJ) complex. HJ DNA is sandwiched between 2 RuvA tetramers; dsDNA enters through RuvA and exits via RuvB. An RuvB hexamer assembles on each DNA strand where it exits the tetramer. Each RuvB hexamer is contacted by two RuvA subunits (via domain III) on 2 adjacent RuvB subunits; this complex drives branch migration. In the full resolvosome a probable DNA-RuvA(4)-RuvB(12)-RuvC(2) complex forms which resolves the HJ.

It localises to the cytoplasm. It carries out the reaction ATP + H2O = ADP + phosphate + H(+). In terms of biological role, the RuvA-RuvB-RuvC complex processes Holliday junction (HJ) DNA during genetic recombination and DNA repair, while the RuvA-RuvB complex plays an important role in the rescue of blocked DNA replication forks via replication fork reversal (RFR). RuvA specifically binds to HJ cruciform DNA, conferring on it an open structure. The RuvB hexamer acts as an ATP-dependent pump, pulling dsDNA into and through the RuvAB complex. RuvB forms 2 homohexamers on either side of HJ DNA bound by 1 or 2 RuvA tetramers; 4 subunits per hexamer contact DNA at a time. Coordinated motions by a converter formed by DNA-disengaged RuvB subunits stimulates ATP hydrolysis and nucleotide exchange. Immobilization of the converter enables RuvB to convert the ATP-contained energy into a lever motion, pulling 2 nucleotides of DNA out of the RuvA tetramer per ATP hydrolyzed, thus driving DNA branch migration. The RuvB motors rotate together with the DNA substrate, which together with the progressing nucleotide cycle form the mechanistic basis for DNA recombination by continuous HJ branch migration. Branch migration allows RuvC to scan DNA until it finds its consensus sequence, where it cleaves and resolves cruciform DNA. This chain is Holliday junction branch migration complex subunit RuvB, found in Burkholderia cenocepacia (strain ATCC BAA-245 / DSM 16553 / LMG 16656 / NCTC 13227 / J2315 / CF5610) (Burkholderia cepacia (strain J2315)).